The primary structure comprises 197 residues: Holliday junction branch migration complex subunit RuvA (197 aa).

The segment at 1–64 (MIGRLRGIVA…EDSVSLYGFL (64 aa)) is domain I. Residues 65 to 143 (REGERRLFRD…QFGAGGALPT (79 aa)) are domain II. Residues 144–153 (GSGPAPADPL) are flexible linker. Residues 153-197 (LSDATVALQQLGYKPAEAARMAREAFNEGDEVAIVIRKALQSALR) form a domain III region.

This sequence belongs to the RuvA family. As to quaternary structure, homotetramer. Forms an RuvA(8)-RuvB(12)-Holliday junction (HJ) complex. HJ DNA is sandwiched between 2 RuvA tetramers; dsDNA enters through RuvA and exits via RuvB. An RuvB hexamer assembles on each DNA strand where it exits the tetramer. Each RuvB hexamer is contacted by two RuvA subunits (via domain III) on 2 adjacent RuvB subunits; this complex drives branch migration. In the full resolvosome a probable DNA-RuvA(4)-RuvB(12)-RuvC(2) complex forms which resolves the HJ.

The protein localises to the cytoplasm. In terms of biological role, the RuvA-RuvB-RuvC complex processes Holliday junction (HJ) DNA during genetic recombination and DNA repair, while the RuvA-RuvB complex plays an important role in the rescue of blocked DNA replication forks via replication fork reversal (RFR). RuvA specifically binds to HJ cruciform DNA, conferring on it an open structure. The RuvB hexamer acts as an ATP-dependent pump, pulling dsDNA into and through the RuvAB complex. HJ branch migration allows RuvC to scan DNA until it finds its consensus sequence, where it cleaves and resolves the cruciform DNA. In Stenotrophomonas maltophilia (strain R551-3), this protein is Holliday junction branch migration complex subunit RuvA.